A 29-amino-acid chain; its full sequence is Cyclotide mela-7 (29 aa).

A cross-link (cyclopeptide (Gly-Asn)) is located at residues 1–29; it reads GLPTCGETCFKGKCYTPGCSCSYPICKKN. Cystine bridges form between Cys-5–Cys-19, Cys-9–Cys-21, and Cys-14–Cys-26.

In terms of processing, this is a cyclic peptide. Post-translationally, contains 3 disulfide bonds.

In terms of biological role, probably participates in a plant defense mechanism (Potential). Binds to and induces leakage in phospholipd membranes, particularly ones containing 1-palmitoyl-2-oleophosphatidylethanolamine (POPE). In vitro, displays cytotoxicity against cultured cells but no hemolytic activity towards fresh erythrocytes. Not active against Gram-negative bacterium E.coli ATCC 25922 or Gram-positive bacterium S.aureus ATCC 25923 up to a concentration of 64 uM. The protein is Cyclotide mela-7 of Melicytus latifolius (Norfolk Island mahoe).